The chain runs to 543 residues: Protein GPR108 (543 aa).

A signal peptide spans 1-32 (MAVSERRGLGRGSPAEWGQRLLLVLLLGGCSG). 2 N-linked (GlcNAc...) asparagine glycosylation sites follow: N57 and N109. The disordered stretch occupies residues 149 to 186 (SKPGLPKPQATVPRKVDGGGTSAASKPKSTPAVIQGPS). Residues N200, N204, and N228 are each glycosylated (N-linked (GlcNAc...) asparagine). 7 helical membrane-spanning segments follow: residues 263–283 (LYMVMSACFLAAGIFWVSILC), 292–312 (IHWLMAALAFTKSISLLFHSI), 336–356 (LLKGALLFITIALIGSGWAFI), 367–387 (VFGIVIPMQVLANVAYIIIES), 401–421 (ILFLVDLICCGAILFPVVWSI), 449–469 (VMVICYVYFTRIIAILLQVAV), and 473–493 (WQWLYQLLVEGSTLAFFVLTG). A glycan (N-linked (GlcNAc...) asparagine) is linked at N534.

This sequence belongs to the LU7TM family.

It is found in the golgi apparatus. The protein resides in the cis-Golgi network membrane. The protein localises to the trans-Golgi network membrane. Its subcellular location is the golgi apparatus membrane. In terms of biological role, may play a role in intracellular immune modulation by activating NF-kappaB response and attenuating Toll-like-receptor response. Functionally, (Microbial infection) Plays an essential function in adeno-associated virus (AAV) transduction across multiple serotypes except AAV5. May play a critical role in mediating the endosomal virus escape or in the AAV virions trafficking from endosomes to the nucleus. In Homo sapiens (Human), this protein is Protein GPR108.